The chain runs to 249 residues: ATP synthase subunit a, chloroplastic (249 aa).

Transmembrane regions (helical) follow at residues 40–60 (QVLITSWVVIAILLGSAVLAI), 97–117 (VPFIGTLFLFIFVSNWSGALL), 136–156 (INTTVALALLTSVAYFYAGLS), 201–221 (LVVVVLVSLVPLVVPIPVMFL), and 222–242 (GLFTSGIQALIFATLAAAYIG).

The protein belongs to the ATPase A chain family. As to quaternary structure, F-type ATPases have 2 components, CF(1) - the catalytic core - and CF(0) - the membrane proton channel. CF(1) has five subunits: alpha(3), beta(3), gamma(1), delta(1), epsilon(1). CF(0) has four main subunits: a, b, b' and c.

It localises to the plastid. The protein localises to the chloroplast thylakoid membrane. Key component of the proton channel; it plays a direct role in the translocation of protons across the membrane. This chain is ATP synthase subunit a, chloroplastic, found in Nasturtium officinale (Watercress).